A 125-amino-acid chain; its full sequence is Protein JAZ13 (125 aa).

Residues Leu6–Leu10 carry the EAR motif. Residues Lys99–Phe125 form a disordered region. Low complexity predominate over residues Thr112–Phe125.

In terms of assembly, monomer. Lack of homodimerization, and very weak or no interaction with AFPH2/NINJA and other JAZ proteins. Interacts (via EAR motif) with TPL. Interacts (via jas motif) with MYC2. Phosphorylated at multiple serine residues.

Functionally, non-TIFY functional repressor of jasmonate (JA)-mediated growth and defense responses. Intrinsically resistant to JA-induced turnover, probably due to the absence of the canonical degron that strongly interacts with COI1 in the presence of JA-Ile in the TIFY/JAZ proteins. The polypeptide is Protein JAZ13 (Arabidopsis thaliana (Mouse-ear cress)).